Here is a 200-residue protein sequence, read N- to C-terminus: Ephrin-A2 (200 aa).

The N-terminal stretch at 1–22 is a signal peptide; sequence MPRWEAAALLAAIVGVCVWSDD. In terms of domain architecture, Ephrin RBD spans 28-161; that stretch reads SDRYAVYWNR…KLKVYVRPTN (134 aa). N-linked (GlcNAc...) asparagine glycosylation is present at N36. 2 disulfides stabilise this stretch: C61/C101 and C89/C150. Residues N161 and N175 are each glycosylated (N-linked (GlcNAc...) asparagine). Residue N175 is the site of GPI-anchor amidated asparagine attachment. The propeptide at 176-200 is removed in mature form; it reads NSCCSLAVPRAVLVAAPVFWTLLGS.

It belongs to the ephrin family. Binds to the receptor tyrosine kinases EPHA3, EPHA4 and EPHA5. Interacts with EPHA8; activates EPHA8. Expressed in a gradient across the tectum being more strongly expressed at the posterior pole.

It localises to the cell membrane. In terms of biological role, cell surface GPI-bound ligand for Eph receptors, a family of receptor tyrosine kinases which are crucial for migration, repulsion and adhesion during neuronal, vascular and epithelial development. Binds promiscuously Eph receptors residing on adjacent cells, leading to contact-dependent bidirectional signaling into neighboring cells. The signaling pathway downstream of the receptor is referred to as forward signaling while the signaling pathway downstream of the ephrin ligand is referred to as reverse signaling. With the EPHA2 receptor may play a role in bone remodeling through regulation of osteoclastogenesis and osteoblastogenesis. This is Ephrin-A2 (EFNA2) from Gallus gallus (Chicken).